The sequence spans 148 residues: MKALTILGLVLLSVTVQGKIFERCELARTLKKLGLDGYKGVSLANWVCLAKWESGYNTEATNYNPGDESTDYGIFQINSRYWCNNGKTPGAVDACHISCSALLQNNIADAVACAKRVVSDPQGIRAWVAWRNHCQNKDVSQYVKGCGV.

Residues Met1 to Gly18 form the signal peptide. Residues Lys19–Val148 form the C-type lysozyme domain. Cystine bridges form between Cys24–Cys146, Cys48–Cys134, Cys83–Cys99, and Cys95–Cys113. Catalysis depends on residues Glu53 and Asp71.

This sequence belongs to the glycosyl hydrolase 22 family. In terms of assembly, monomer.

It localises to the secreted. It catalyses the reaction Hydrolysis of (1-&gt;4)-beta-linkages between N-acetylmuramic acid and N-acetyl-D-glucosamine residues in a peptidoglycan and between N-acetyl-D-glucosamine residues in chitodextrins.. Lysozymes have primarily a bacteriolytic function; those in tissues and body fluids are associated with the monocyte-macrophage system and enhance the activity of immunoagents. Also plays a role in digestion in this species. This chain is Lysozyme C (LYZ), found in Semnopithecus entellus (Northern plains gray langur).